The following is a 190-amino-acid chain: UPF0200 protein TSIB_0920 (190 aa).

7–14 (GMPGSGKG) provides a ligand contact to ATP.

The protein belongs to the UPF0200 family.

The polypeptide is UPF0200 protein TSIB_0920 (Thermococcus sibiricus (strain DSM 12597 / MM 739)).